We begin with the raw amino-acid sequence, 349 residues long: tRNA pseudouridine synthase D (349 aa).

Phe27 provides a ligand contact to substrate. The active-site Nucleophile is the Asp80. Asn129 provides a ligand contact to substrate. Residues 155 to 303 enclose the TRUD domain; the sequence is GVPNYFGAQR…VEAARRAMLL (149 aa). Phe329 contributes to the substrate binding site.

The protein belongs to the pseudouridine synthase TruD family.

The enzyme catalyses uridine(13) in tRNA = pseudouridine(13) in tRNA. Its function is as follows. Responsible for synthesis of pseudouridine from uracil-13 in transfer RNAs. The sequence is that of tRNA pseudouridine synthase D from Shigella sonnei (strain Ss046).